Consider the following 3118-residue polypeptide: Laminin subunit alpha-2 (3118 aa).

The signal sequence occupies residues 1-19; sequence MPAATAGILLLLLLGTLEG. Residues 31-282 enclose the Laminin N-terminal domain; that stretch reads QQRGLFPAVL…SVKDISVGGM (252 aa). N-linked (GlcNAc...) asparagine glycosylation is found at asparagine 51 and asparagine 85. 6 disulfides stabilise this stretch: cysteine 283-cysteine 292, cysteine 285-cysteine 303, cysteine 305-cysteine 314, cysteine 317-cysteine 337, cysteine 340-cysteine 349, and cysteine 342-cysteine 374. 4 consecutive Laminin EGF-like domains span residues 283–339, 340–409, 410–464, and 465–513; these read CICY…ECEA, CNCH…PCQP, CHCD…DCQP, and CNCS…GCEE. N-linked (GlcNAc...) asparagine glycosylation occurs at asparagine 299. 2 N-linked (GlcNAc...) asparagine glycosylation sites follow: asparagine 359 and asparagine 376. 10 disulfide bridges follow: cysteine 377/cysteine 386, cysteine 389/cysteine 407, cysteine 410/cysteine 422, cysteine 412/cysteine 438, cysteine 440/cysteine 449, cysteine 452/cysteine 462, cysteine 465/cysteine 478, cysteine 467/cysteine 482, cysteine 484/cysteine 493, and cysteine 496/cysteine 511. An N-linked (GlcNAc...) asparagine glycan is attached at asparagine 466. One can recognise a Laminin EGF-like 5; first part domain in the interval 514–523; that stretch reads CFCSGVSNRC. The Laminin IV type A 1 domain maps to 527–719; sequence YWTYGNIQDM…DRRIATDVEV (193 aa). The region spanning 720–752 is the Laminin EGF-like 5; second part domain; it reads CQCPPGYSGSSCETCWPRHRRVNGTIFGGICEP. N-linked (GlcNAc...) asparagine glycosylation is present at asparagine 742. 32 cysteine pairs are disulfide-bonded: cysteine 753–cysteine 762, cysteine 755–cysteine 769, cysteine 772–cysteine 781, cysteine 784–cysteine 800, cysteine 803–cysteine 818, cysteine 805–cysteine 828, cysteine 831–cysteine 840, cysteine 843–cysteine 858, cysteine 861–cysteine 875, cysteine 863–cysteine 882, cysteine 885–cysteine 894, cysteine 897–cysteine 911, cysteine 914–cysteine 926, cysteine 916–cysteine 933, cysteine 935–cysteine 944, cysteine 947–cysteine 960, cysteine 963–cysteine 975, cysteine 965–cysteine 981, cysteine 983–cysteine 992, cysteine 995–cysteine 1007, cysteine 1010–cysteine 1019, cysteine 1012–cysteine 1026, cysteine 1028–cysteine 1037, cysteine 1040–cysteine 1053, cysteine 1056–cysteine 1068, cysteine 1058–cysteine 1075, cysteine 1077–cysteine 1086, cysteine 1089–cysteine 1099, cysteine 1102–cysteine 1114, cysteine 1104–cysteine 1130, cysteine 1132–cysteine 1141, and cysteine 1144–cysteine 1159. 8 consecutive Laminin EGF-like domains span residues 753–802, 803–860, 861–913, 914–962, 963–1009, 1010–1055, 1056–1101, and 1102–1161; these read CQCF…DCQP, CACP…SCQP, CQCN…NCQP, CRCN…GCLP, CNCN…GCIA, CDCS…GCKV, CNCS…LCTL, and CDCF…GCSS. Asparagine 919 carries an N-linked (GlcNAc...) asparagine glycan. N-linked (GlcNAc...) asparagine glycosylation occurs at asparagine 1031. Asparagine 1057 carries an N-linked (GlcNAc...) asparagine glycan. The Laminin EGF-like 14; first part domain maps to 1162–1171; the sequence is CYCFGVTSQC. In terms of domain architecture, Laminin IV type A 2 spans 1172–1375; the sequence is SEAKGLIRTW…GSPPAHLIER (204 aa). In terms of domain architecture, Laminin EGF-like 14; second part spans 1376–1415; sequence CDCPPGYSGLSCETCAPGFYRLRSEPGGRTPGPTLGTCVP. Disulfide bonds link cysteine 1378-cysteine 1387, cysteine 1416-cysteine 1425, cysteine 1418-cysteine 1432, cysteine 1435-cysteine 1444, cysteine 1447-cysteine 1462, cysteine 1465-cysteine 1480, cysteine 1467-cysteine 1490, cysteine 1493-cysteine 1502, cysteine 1505-cysteine 1520, cysteine 1523-cysteine 1535, cysteine 1525-cysteine 1542, cysteine 1544-cysteine 1553, and cysteine 1556-cysteine 1567. Laminin EGF-like domains are found at residues 1416 to 1464, 1465 to 1522, and 1523 to 1569; these read CQCN…DCQP, CACP…SCQE, and CECD…ECVF. Residues 1570-2140 are domain II and I; the sequence is CGDECTGLLL…NQARKQANSI (571 aa). 12 N-linked (GlcNAc...) asparagine glycosylation sites follow: asparagine 1593, asparagine 1610, asparagine 1696, asparagine 1806, asparagine 1897, asparagine 1912, asparagine 1916, asparagine 2013, asparagine 2024, asparagine 2041, asparagine 2122, and asparagine 2236. Residues 1662 to 1863 adopt a coiled-coil conformation; that stretch reads QDAERTNSRA…DIKTKLPPMS (202 aa). Residues 1923 to 2146 adopt a coiled-coil conformation; it reads AYSNIKDYID…ANSIKVSVSS (224 aa). Laminin G-like domains follow at residues 2141-2324, 2336-2517, 2522-2706, 2759-2930, and 2929-3115; these read KVSV…CKGC, TIQF…TKGC, VYTV…IGRC, SKQF…VGTC, and TCFA…PVSC. Cysteine 2298 and cysteine 2324 are oxidised to a cystine. Asparagine 2356, asparagine 2431, and asparagine 2474 each carry an N-linked (GlcNAc...) asparagine glycan. Cysteine 2491 and cysteine 2517 are oxidised to a cystine. 3 N-linked (GlcNAc...) asparagine glycosylation sites follow: asparagine 2547, asparagine 2554, and asparagine 2644. Cysteine 2679 and cysteine 2706 are oxidised to a cystine. A glycan (N-linked (GlcNAc...) asparagine) is linked at asparagine 2889. 2 cysteine pairs are disulfide-bonded: cysteine 2905/cysteine 2930 and cysteine 3083/cysteine 3115.

In terms of assembly, laminin is a complex glycoprotein, consisting of three different polypeptide chains (alpha, beta, gamma), which are bound to each other by disulfide bonds into a cross-shaped molecule comprising one long and three short arms with globules at each end. Alpha-2 is a subunit of laminin-2 (laminin-211 or merosin), laminin-4 (laminin-221 or S-merosin) and laminin-12 (laminin-213). Interacts with FBLN1, FBLN2 and NID2.

Its subcellular location is the secreted. It localises to the extracellular space. It is found in the extracellular matrix. The protein resides in the basement membrane. Functionally, binding to cells via a high affinity receptor, laminin is thought to mediate the attachment, migration and organization of cells into tissues during embryonic development by interacting with other extracellular matrix components. The polypeptide is Laminin subunit alpha-2 (Lama2) (Mus musculus (Mouse)).